We begin with the raw amino-acid sequence, 881 residues long: Beta-mannosidase (881 aa).

The signal sequence occupies residues 1-18 (MHLHLLFLLALCGAGCMA). Residues asparagine 35, asparagine 77, asparagine 89, and asparagine 113 are each glycosylated (N-linked (GlcNAc...) asparagine). The cysteines at positions 167 and 176 are disulfide-linked. Residue 190–192 (WDW) coordinates substrate. 3 N-linked (GlcNAc...) asparagine glycosylation sites follow: asparagine 226, asparagine 297, and asparagine 302. Position 456 (asparagine 456) interacts with substrate. Glutamate 457 serves as the catalytic Proton donor. Intrachain disulfides connect cysteine 540–cysteine 629, cysteine 732–cysteine 761, and cysteine 764–cysteine 769. Catalysis depends on glutamate 554, which acts as the Nucleophile. Residue asparagine 803 is glycosylated (N-linked (GlcNAc...) asparagine).

Belongs to the glycosyl hydrolase 2 family. Monomer.

Its subcellular location is the lysosome. It catalyses the reaction Hydrolysis of terminal, non-reducing beta-D-mannose residues in beta-D-mannosides.. It functions in the pathway glycan metabolism; N-glycan degradation. In terms of biological role, exoglycosidase that cleaves the single beta-linked mannose residue from the non-reducing end of all N-linked glycoprotein oligosaccharides. This chain is Beta-mannosidase, found in Rattus norvegicus (Rat).